We begin with the raw amino-acid sequence, 101 residues long: Ubiquitin-related modifier 1 (101 aa).

Gly-101 is subject to 1-thioglycine. Residue Gly-101 forms a Glycyl lysine isopeptide (Gly-Lys) (interchain with K-? in acceptor proteins) linkage.

The protein belongs to the URM1 family. As to quaternary structure, component of a complex at least composed of URM1, CTU2/NCS2 and CTU1/ATPBD3. Post-translationally, C-terminal thiocarboxylation occurs in 2 steps, it is first acyl-adenylated (-COAMP) via the hesA/moeB/thiF part of MOCS3, then thiocarboxylated (-COSH) via the rhodanese domain of MOCS3.

It is found in the cytoplasm. The protein operates within tRNA modification; 5-methoxycarbonylmethyl-2-thiouridine-tRNA biosynthesis. Acts as a sulfur carrier required for 2-thiolation of mcm(5)S(2)U at tRNA wobble positions of cytosolic tRNA(Lys), tRNA(Glu) and tRNA(Gln). Serves as sulfur donor in tRNA 2-thiolation reaction by being thiocarboxylated (-COSH) at its C-terminus by MOCS3. The sulfur is then transferred to tRNA to form 2-thiolation of mcm(5)S(2)U. Also acts as a ubiquitin-like protein (UBL) that is covalently conjugated via an isopeptide bond to lysine residues of target proteins such as MOCS3, ATPBD3, CTU2, USP15 and CAS. The thiocarboxylated form serves as substrate for conjugation and oxidative stress specifically induces the formation of UBL-protein conjugates. The polypeptide is Ubiquitin-related modifier 1 (Bos taurus (Bovine)).